Reading from the N-terminus, the 77-residue chain is Sec-independent protein translocase protein TatA 2 (77 aa).

Residues 2–22 form a helical membrane-spanning segment; that stretch reads FPGGISMTELIIILAVILLLF. The tract at residues 52-77 is disordered; it reads KEVKAEDVKTEERKEEKKEEKEKVEA.

It belongs to the TatA/E family. As to quaternary structure, forms a complex with TatC.

It localises to the cell inner membrane. Part of the twin-arginine translocation (Tat) system that transports large folded proteins containing a characteristic twin-arginine motif in their signal peptide across membranes. TatA could form the protein-conducting channel of the Tat system. The sequence is that of Sec-independent protein translocase protein TatA 2 from Aquifex aeolicus (strain VF5).